The chain runs to 327 residues: Undecaprenyl-phosphate 4-deoxy-4-formamido-L-arabinose transferase (327 aa).

The next 2 membrane-spanning stretches (helical) occupy residues 233–253 (ILSL…LLLI) and 268–288 (VFTL…GMGL).

Belongs to the glycosyltransferase 2 family.

It is found in the cell inner membrane. It carries out the reaction UDP-4-deoxy-4-formamido-beta-L-arabinose + di-trans,octa-cis-undecaprenyl phosphate = 4-deoxy-4-formamido-alpha-L-arabinopyranosyl di-trans,octa-cis-undecaprenyl phosphate + UDP. The protein operates within glycolipid biosynthesis; 4-amino-4-deoxy-alpha-L-arabinose undecaprenyl phosphate biosynthesis; 4-amino-4-deoxy-alpha-L-arabinose undecaprenyl phosphate from UDP-4-deoxy-4-formamido-beta-L-arabinose and undecaprenyl phosphate: step 1/2. It functions in the pathway bacterial outer membrane biogenesis; lipopolysaccharide biosynthesis. Its function is as follows. Catalyzes the transfer of 4-deoxy-4-formamido-L-arabinose from UDP to undecaprenyl phosphate. The modified arabinose is attached to lipid A and is required for resistance to polymyxin and cationic antimicrobial peptides. The polypeptide is Undecaprenyl-phosphate 4-deoxy-4-formamido-L-arabinose transferase (Pectobacterium carotovorum subsp. carotovorum (strain PC1)).